A 213-amino-acid chain; its full sequence is Ras-related protein Rab-4A (213 aa).

GTP-binding residues include Gly18, Thr19, Gly20, Lys21, Ser22, Cys23, Ser37, His39, and Thr40. Ser22 is a binding site for Mg(2+). The short motif at 39 to 44 (HTIGVE) is the Switch 1 element. Residues Thr40 and Asp63 each coordinate Mg(2+). The Switch 2 motif lies at 65 to 74 (AGQERFRSVT). GTP-binding residues include Gly66, Asn121, Lys122, Asp124, Ala152, and Leu153. Residues Cys211 and Cys213 are each lipidated (S-geranylgeranyl cysteine). A Cysteine methyl ester modification is found at Cys213.

It belongs to the small GTPase superfamily. Rab family. It depends on Mg(2+) as a cofactor.

The protein localises to the membrane. Its subcellular location is the cytoplasm. It localises to the early endosome membrane. The protein resides in the recycling endosome membrane. The enzyme catalyses GTP + H2O = GDP + phosphate + H(+). With respect to regulation, regulated by guanine nucleotide exchange factors (GEFs) which promote the exchange of bound GDP for free GTP. Regulated by GTPase activating proteins (GAPs) which increase the GTP hydrolysis activity. Inhibited by GDP dissociation inhibitors (GDIs). In terms of biological role, the small GTPases Rab are key regulators of intracellular membrane trafficking, from the formation of transport vesicles to their fusion with membranes. Rabs cycle between an inactive GDP-bound form and an active GTP-bound form that is able to recruit to membranes different sets of downstream effectors directly responsible for vesicle formation, movement, tethering and fusion. RAB4A is involved in protein transport. Also plays a role in vesicular traffic. Mediates VEGFR2 endosomal trafficking to enhance VEGFR2 signaling. Acts as a regulator of platelet alpha-granule release during activation and aggregation of platelets. This chain is Ras-related protein Rab-4A (rab4a), found in Danio rerio (Zebrafish).